The primary structure comprises 293 residues: Glycine--tRNA ligase alpha subunit (293 aa).

It belongs to the class-II aminoacyl-tRNA synthetase family. As to quaternary structure, tetramer of two alpha and two beta subunits.

The protein localises to the cytoplasm. It catalyses the reaction tRNA(Gly) + glycine + ATP = glycyl-tRNA(Gly) + AMP + diphosphate. The polypeptide is Glycine--tRNA ligase alpha subunit (Acaryochloris marina (strain MBIC 11017)).